Consider the following 440-residue polypeptide: Chromosome partition protein MukF (440 aa).

A leucine-zipper region spans residues 208–236 (LDETSGNLRELQDTLNAAGDKLQSQLLRI).

It belongs to the MukF family. Interacts, and probably forms a ternary complex, with MukE and MukB via its C-terminal region. The complex formation is stimulated by calcium or magnesium. It is required for an interaction between MukE and MukB.

The protein resides in the cytoplasm. The protein localises to the nucleoid. Its function is as follows. Involved in chromosome condensation, segregation and cell cycle progression. May participate in facilitating chromosome segregation by condensation DNA from both sides of a centrally located replisome during cell division. Not required for mini-F plasmid partitioning. Probably acts via its interaction with MukB and MukE. Overexpression results in anucleate cells. It has a calcium binding activity. This chain is Chromosome partition protein MukF, found in Histophilus somni (strain 129Pt) (Haemophilus somnus).